Reading from the N-terminus, the 72-residue chain is Translation initiation factor IF-1 (72 aa).

The region spanning 1–72 (MSNDDSIEFE…TKGRITYRMK (72 aa)) is the S1-like domain.

It belongs to the IF-1 family. Component of the 30S ribosomal translation pre-initiation complex which assembles on the 30S ribosome in the order IF-2 and IF-3, IF-1 and N-formylmethionyl-tRNA(fMet); mRNA recruitment can occur at any time during PIC assembly.

The protein resides in the cytoplasm. One of the essential components for the initiation of protein synthesis. Stabilizes the binding of IF-2 and IF-3 on the 30S subunit to which N-formylmethionyl-tRNA(fMet) subsequently binds. Helps modulate mRNA selection, yielding the 30S pre-initiation complex (PIC). Upon addition of the 50S ribosomal subunit IF-1, IF-2 and IF-3 are released leaving the mature 70S translation initiation complex. The chain is Translation initiation factor IF-1 from Xanthomonas campestris pv. campestris (strain B100).